The primary structure comprises 199 residues: OPA3-like protein (199 aa).

Residues arginine 98–serine 141 adopt a coiled-coil conformation.

Belongs to the OPA3 family.

This Dictyostelium discoideum (Social amoeba) protein is OPA3-like protein.